A 117-amino-acid polypeptide reads, in one-letter code: Large ribosomal subunit protein uL18 (117 aa).

Belongs to the universal ribosomal protein uL18 family. Part of the 50S ribosomal subunit; part of the 5S rRNA/L5/L18/L25 subcomplex. Contacts the 5S and 23S rRNAs.

Its function is as follows. This is one of the proteins that bind and probably mediate the attachment of the 5S RNA into the large ribosomal subunit, where it forms part of the central protuberance. The sequence is that of Large ribosomal subunit protein uL18 from Klebsiella pneumoniae (strain 342).